The primary structure comprises 148 residues: Lysozyme C (148 aa).

The N-terminal stretch at 1–18 (MKAVIILGLVLLSVTVQG) is a signal peptide. The C-type lysozyme domain occupies 19-148 (KIFERCELAR…VSQYVQGCGV (130 aa)). 4 cysteine pairs are disulfide-bonded: Cys24–Cys146, Cys48–Cys134, Cys83–Cys99, and Cys95–Cys113. Active-site residues include Glu53 and Asp71.

Belongs to the glycosyl hydrolase 22 family. Monomer.

The protein resides in the secreted. It carries out the reaction Hydrolysis of (1-&gt;4)-beta-linkages between N-acetylmuramic acid and N-acetyl-D-glucosamine residues in a peptidoglycan and between N-acetyl-D-glucosamine residues in chitodextrins.. In terms of biological role, lysozymes have primarily a bacteriolytic function; those in tissues and body fluids are associated with the monocyte-macrophage system and enhance the activity of immunoagents. The protein is Lysozyme C (LYZ) of Papio anubis (Olive baboon).